We begin with the raw amino-acid sequence, 962 residues long: Glycine dehydrogenase (decarboxylating) (962 aa).

Lys-709 is modified (N6-(pyridoxal phosphate)lysine).

It belongs to the GcvP family. In terms of assembly, the glycine cleavage system is composed of four proteins: P, T, L and H. Pyridoxal 5'-phosphate is required as a cofactor.

The catalysed reaction is N(6)-[(R)-lipoyl]-L-lysyl-[glycine-cleavage complex H protein] + glycine + H(+) = N(6)-[(R)-S(8)-aminomethyldihydrolipoyl]-L-lysyl-[glycine-cleavage complex H protein] + CO2. In terms of biological role, the glycine cleavage system catalyzes the degradation of glycine. The P protein binds the alpha-amino group of glycine through its pyridoxal phosphate cofactor; CO(2) is released and the remaining methylamine moiety is then transferred to the lipoamide cofactor of the H protein. This is Glycine dehydrogenase (decarboxylating) from Shewanella amazonensis (strain ATCC BAA-1098 / SB2B).